The primary structure comprises 38 residues: Large ribosomal subunit protein bL36 (38 aa).

It belongs to the bacterial ribosomal protein bL36 family.

This Gemmatimonas aurantiaca (strain DSM 14586 / JCM 11422 / NBRC 100505 / T-27) protein is Large ribosomal subunit protein bL36.